A 347-amino-acid polypeptide reads, in one-letter code: UDP-N-acetylenolpyruvoylglucosamine reductase (347 aa).

The 173-residue stretch at 15-187 (FGIEQTCSYL…TAIGLKLPKR (173 aa)) folds into the FAD-binding PCMH-type domain. Arg-163 is a catalytic residue. Residue Ser-233 is the Proton donor of the active site. Glu-328 is a catalytic residue.

It belongs to the MurB family. FAD serves as cofactor.

Its subcellular location is the cytoplasm. The catalysed reaction is UDP-N-acetyl-alpha-D-muramate + NADP(+) = UDP-N-acetyl-3-O-(1-carboxyvinyl)-alpha-D-glucosamine + NADPH + H(+). It functions in the pathway cell wall biogenesis; peptidoglycan biosynthesis. Its function is as follows. Cell wall formation. The chain is UDP-N-acetylenolpyruvoylglucosamine reductase from Vibrio parahaemolyticus serotype O3:K6 (strain RIMD 2210633).